The primary structure comprises 407 residues: Phosphonoacetate hydrolase (407 aa).

Positions 25, 64, 202, 206, 241, 242, and 368 each coordinate Zn(2+). Residues T64 and D202 each contribute to the substrate site. Substrate is bound by residues H242 and H368.

Belongs to the alkaline phosphatase family. PhnA subfamily. As to quaternary structure, homodimer. Zn(2+) serves as cofactor.

The enzyme catalyses phosphonoacetate + H2O = acetate + phosphate + H(+). Completely inhibited by EDTA and 1,10-phenanthroline. Moderately inhibited by the phosphonocarboxylic acids phosphonoformate and 3-phosphonopropionate and the phosphonate herbicide glyphosate. Partially inhibited by the reducing agents sodium sulfide and dithiotheitol and the chelating agent iminodiacetate. Nonphosphonate analogs of phosphonoacetate, such as arsonoacetate, sulfonoacetate and malonate are poor inhibitors. Inorganic phosphate, acetate and the known phosphonotase inhibitor phosphite have little effect on activity. Not inhibited by the alkylphosphonic acids methylphosphonate and ethylphosphonate, or the aminoalkylphosphonates 2-aminoethylphosphonate, 3-aminopropylphosphonate and 4-aminobutylphosphonate. Fe(3+), Ca(2+), Mg(2+) and Cs(+) have no effect on activity. Activity is slightly increased by the aminoalkylphosphonates 1-aminoethylphosphonate, 1-aminobutylphosphonate, 2-amino-4-butylphosphonate. Activity is increased by Zn(2+), Mn(2+) and Co(2+), these 3 metal ions also allow recovery of activity after EDTA treatment. In terms of biological role, specifically hydrolyzes phosphonoacetate. Does not have activity on other organophosphonates or acetates. In Pseudomonas fluorescens, this protein is Phosphonoacetate hydrolase.